A 253-amino-acid polypeptide reads, in one-letter code: Transcription factor ORG2 (253 aa).

The bHLH domain maps to 71–123; the sequence is VKKLNHNASERDRRKKINTLFSSLRSCLPASDQSKKLSIPETVSKSLKYIPEL.

In terms of assembly, homodimer. Roots.

The protein resides in the nucleus. This Arabidopsis thaliana (Mouse-ear cress) protein is Transcription factor ORG2 (ORG2).